We begin with the raw amino-acid sequence, 171 residues long: Translation initiation factor IF-3 (171 aa).

It belongs to the IF-3 family. As to quaternary structure, monomer.

Its subcellular location is the cytoplasm. Functionally, IF-3 binds to the 30S ribosomal subunit and shifts the equilibrium between 70S ribosomes and their 50S and 30S subunits in favor of the free subunits, thus enhancing the availability of 30S subunits on which protein synthesis initiation begins. In Halalkalibacterium halodurans (strain ATCC BAA-125 / DSM 18197 / FERM 7344 / JCM 9153 / C-125) (Bacillus halodurans), this protein is Translation initiation factor IF-3.